Consider the following 234-residue polypeptide: MPGQIPLIGEKLPEMVVHTDHGPKKLPDDYKGKWLVIFSHPADFTPVCTTEFVAFAKRYEDFKKLNTELLGLSVDNSFSHIKWKEWIKEKLNVEIPFPIIADPLGQVATKLGMLHPEGGVVTVRAVFIVDPEGKVRAILYYPLNVGRNIDEILRLLKALQVTDKLGRATPANWPCNEIVKDHVIVPPASTEQEAKERLQKYECFDWWFCHEKAPAEDVEEAKKFLERPAKELCK.

Residues 6–161 enclose the Thioredoxin domain; that stretch reads PLIGEKLPEM…ILRLLKALQV (156 aa). Cys48 (cysteine sulfenic acid (-SOH) intermediate) is an active-site residue. Arg124 is a substrate binding site. Cysteines 203 and 209 form a disulfide.

This sequence belongs to the peroxiredoxin family. Prx6 subfamily. As to quaternary structure, homodecamer. Pentamer of dimers that assemble into a ring structure.

The protein localises to the cytoplasm. It carries out the reaction a hydroperoxide + [thioredoxin]-dithiol = an alcohol + [thioredoxin]-disulfide + H2O. In terms of biological role, thiol-specific peroxidase that catalyzes the reduction of hydrogen peroxide and organic hydroperoxides to water and alcohols, respectively. Plays a role in cell protection against oxidative stress by detoxifying peroxides. The polypeptide is Peroxiredoxin (Ignicoccus hospitalis (strain KIN4/I / DSM 18386 / JCM 14125)).